Here is a 399-residue protein sequence, read N- to C-terminus: UDP-galactopyranose mutase (399 aa).

Residues Ser25, Glu44–Lys45, Asn52, and His71–Ile72 contribute to the FAD site. Residues Ser171, Trp175, Tyr200, Asn297, Arg306, and Tyr345 each coordinate UDP-alpha-D-galactose. FAD is bound at residue Arg374. Tyr380 contacts UDP-alpha-D-galactose. Ile381–Ala386 serves as a coordination point for FAD.

It belongs to the UDP-galactopyranose/dTDP-fucopyranose mutase family. Requires FAD as cofactor.

The catalysed reaction is UDP-alpha-D-galactose = UDP-alpha-D-galactofuranose. Involved in the conversion of UDP-GalP into UDP-GalF through a 2-keto intermediate. In Mycoplasma pneumoniae (strain ATCC 29342 / M129 / Subtype 1) (Mycoplasmoides pneumoniae), this protein is UDP-galactopyranose mutase (glf).